The sequence spans 60 residues: Large ribosomal subunit protein bL32 (60 aa).

Residues 1 to 20 (MAKPARHTSKAKRNKRRTHY) are compositionally biased toward basic residues. The interval 1 to 22 (MAKPARHTSKAKRNKRRTHYKL) is disordered.

The protein belongs to the bacterial ribosomal protein bL32 family.

The protein is Large ribosomal subunit protein bL32 of Streptococcus agalactiae serotype V (strain ATCC BAA-611 / 2603 V/R).